A 303-amino-acid chain; its full sequence is Ubiquinone biosynthesis protein COQ4, mitochondrial (303 aa).

Positions 191, 192, 195, and 207 each coordinate Zn(2+).

It belongs to the COQ4 family. In terms of assembly, component of a multi-subunit COQ enzyme complex, composed of at least COQ3, COQ4, COQ5, COQ6, COQ7 and COQ9. Requires Zn(2+) as cofactor.

It localises to the mitochondrion inner membrane. The catalysed reaction is a 4-hydroxy-3-methoxy-5-(all-trans-polyprenyl)benzoate + H(+) = a 2-methoxy-6-(all-trans-polyprenyl)phenol + CO2. It participates in cofactor biosynthesis; ubiquinone biosynthesis. In terms of biological role, lyase that catalyzes the C1-decarboxylation of 4-hydroxy-3-methoxy-5-(all-trans-polyprenyl)benzoic acid into 2-methoxy-6-(all-trans-polyprenyl)phenol during ubiquinone biosynthesis. This Komagataella phaffii (strain GS115 / ATCC 20864) (Yeast) protein is Ubiquinone biosynthesis protein COQ4, mitochondrial.